The chain runs to 195 residues: GTP-dependent dephospho-CoA kinase (195 aa).

Residues D49, V50, D68, E127, and D150 each coordinate GTP.

Belongs to the GTP-dependent DPCK family.

The catalysed reaction is 3'-dephospho-CoA + GTP = GDP + CoA + H(+). It participates in cofactor biosynthesis; coenzyme A biosynthesis. Its function is as follows. Catalyzes the GTP-dependent phosphorylation of the 3'-hydroxyl group of dephosphocoenzyme A to form coenzyme A (CoA). In Methanosarcina acetivorans (strain ATCC 35395 / DSM 2834 / JCM 12185 / C2A), this protein is GTP-dependent dephospho-CoA kinase.